A 338-amino-acid polypeptide reads, in one-letter code: MHLAALHTPSQIQLNQQGNLKHFLTIEGLSKETLTKILDTAQSFINDQNQLITTPLLEGRTVMNLFFENSTRTRTTFEAAAKRLSANVLNIDIARSSTSKGETLRDTLWNLEAMAADIFVVRHSSSGAAHFIAKDVCPHVAIINAGDGRHAHPTQAMLDMLTIRRETKKPFEELSVAIIGDIKHSRVARSNIAALQTLGCNDIRVIAPNTLLPVGFKEYGDHVRLFNKMDDGVKDCDVIIALRIQNERIDSPALSSQAEFYRMYGLNQERLALAKPDCIVMHPGPMNRGVEIDSSIADGPQSVILHQVTNGIAVRMAVLALSMQGQLQEQGLIEAIAV.

Positions 72 and 73 each coordinate carbamoyl phosphate. Lysine 100 provides a ligand contact to L-aspartate. Carbamoyl phosphate is bound by residues arginine 122, histidine 152, and glutamine 155. The L-aspartate site is built by arginine 186 and arginine 243. Carbamoyl phosphate-binding residues include glycine 284 and proline 285.

It belongs to the aspartate/ornithine carbamoyltransferase superfamily. ATCase family. Heterododecamer (2C3:3R2) of six catalytic PyrB chains organized as two trimers (C3), and six regulatory PyrI chains organized as three dimers (R2).

It carries out the reaction carbamoyl phosphate + L-aspartate = N-carbamoyl-L-aspartate + phosphate + H(+). It functions in the pathway pyrimidine metabolism; UMP biosynthesis via de novo pathway; (S)-dihydroorotate from bicarbonate: step 2/3. In terms of biological role, catalyzes the condensation of carbamoyl phosphate and aspartate to form carbamoyl aspartate and inorganic phosphate, the committed step in the de novo pyrimidine nucleotide biosynthesis pathway. The chain is Aspartate carbamoyltransferase catalytic subunit from Acinetobacter baylyi (strain ATCC 33305 / BD413 / ADP1).